A 636-amino-acid chain; its full sequence is MSSIAQKNRNYFLYIFYGRIFNSSDKTFFIIKKQLVIAPNFFSVDQKLICSSELFCGTACSRSLVVLYENYKKIVILNSPQFFAGLDSGRENQSPDGSVQGNGLKWMLFLCQKSKRTIFSNHSNLFQCPSVAIVLVLALVILGVLAAIPLTLMLTSSAQKMSTDSTDLTDYSIRHPKFWPKTDKIHFDDLGGIPMSSMFPPNVSTCSGFGFACTGAVHMVIPSSKRCDGFKDCQDGSDEENCKECQSVFSCRSHIEEDSKKKRKTKVQPTLICLTAERLCNGVQDCLDGSDEAMCKSTCSKDQFKCNGSNACLPLSAKCDGVKDCSDGSDENNCNKCQKGAHVSLVSRNIKHLFASHVCDGVAQCADRSDEQQCDCKTCSGSDKALCDDGTCIKRSQVCDGKKDCSDGMDEENCPGTCSIEAFATKVKRVTCSDGKDYTESEACSGVEESCGGSCSKCHPKLTFTCPAAGNAQKKCIKRSKVCDGIFDCDDGADEKNCTPVKECGIDNASQFTCDRKCVDASRRCDGVWDCEDKSDEQNCSQCASGSIKCSADKKCLPAYTRCNGVAECSDGSDELKCSCEECLGAHSNTYMCSESNRCLKRDEVCSPYSMCPNATYTDKAYCAALVLKNSGRFPY.

Residues 1 to 130 lie on the Cytoplasmic side of the membrane; that stretch reads MSSIAQKNRN…NHSNLFQCPS (130 aa). A helical; Signal-anchor for type II membrane protein membrane pass occupies residues 131-151; the sequence is VAIVLVLALVILGVLAAIPLT. Over 152–636 the chain is Extracellular; sequence LMLTSSAQKM…VLKNSGRFPY (485 aa). An N-linked (GlcNAc...) asparagine glycan is attached at N202. 8 consecutive LDL-receptor class A domains span residues 205–243, 244–296, 298–335, 336–375, 378–415, 457–499, 503–541, and 542–579; these read TCSG…ENCK, ECQS…AMCK, TCSK…NNCN, KCQK…QQCD, TCSG…ENCP, KCHP…KNCT, ECGI…QNCS, and QCAS…LKCS. Cystine bridges form between C213-C233, C227-C242, C245-C273, C251-C286, C280-C295, C299-C312, C306-C325, C319-C334, C337-C365, C359-C374, C379-C392, C387-C405, C399-C414, C458-C476, C466-C489, C483-C498, C504-C518, C514-C531, C525-C540, C543-C556, C550-C569, and C563-C578. N-linked (GlcNAc...) asparagine glycosylation occurs at N508. N-linked (GlcNAc...) asparagine glycosylation is present at N614.

The protein localises to the cell membrane. In terms of biological role, probable receptor which is required for the oocyte-to-zygote transition although its exact function is controversial. Seems to be required for fertilization probably by promoting the interaction or fusion between sperm and oocyte. Conversely, shown to be dispensable for fertilization but required for the formation of a continuous and cohesive eggshell chitin layer by maintaining a homogenous distribution of chitin synthase chs-1 at the unfertilized oocyte cell membrane. Appears to recruit or maintain together to the unfertilized oocyte cortex several proteins including chs-1, kinase mbk-2 and pseudophosphatases egg-3, and possibly egg-4 and egg-5. The sequence is that of LDL receptor repeat-containing protein egg-1 from Caenorhabditis briggsae.